A 591-amino-acid chain; its full sequence is Probable Xaa-Pro aminopeptidase PEPP (591 aa).

The disordered stretch occupies residues Ser31 to Gly59. Mn(2+)-binding residues include Asp322 and Asp333. Residues Gly441–Ser450 are compositionally biased toward low complexity. Residues Gly441–Lys460 form a disordered region. Positions 511 and 552 each coordinate Mn(2+).

The protein belongs to the peptidase M24B family. The cofactor is Mn(2+).

It catalyses the reaction Release of any N-terminal amino acid, including proline, that is linked to proline, even from a dipeptide or tripeptide.. In terms of biological role, catalyzes the removal of a penultimate prolyl residue from the N-termini of peptides. The sequence is that of Probable Xaa-Pro aminopeptidase PEPP (PEPP) from Sordaria macrospora (strain ATCC MYA-333 / DSM 997 / K(L3346) / K-hell).